The chain runs to 249 residues: Probable transcriptional regulatory protein ZMO0153 (249 aa).

Belongs to the TACO1 family.

The protein localises to the cytoplasm. This is Probable transcriptional regulatory protein ZMO0153 from Zymomonas mobilis subsp. mobilis (strain ATCC 31821 / ZM4 / CP4).